A 165-amino-acid polypeptide reads, in one-letter code: Ribonuclease H2 subunit C (165 aa).

The residue at position 1 (M1) is an N-acetylmethionine.

This sequence belongs to the RNase H2 subunit C family. As to quaternary structure, the RNase H2 complex is a heterotrimer composed of the catalytic subunit RNASEH2A and the non-catalytic subunits RNASEH2B and RNASEH2C.

Its subcellular location is the nucleus. Its function is as follows. Non catalytic subunit of RNase H2, an endonuclease that specifically degrades the RNA of RNA:DNA hybrids. Participates in DNA replication, possibly by mediating the removal of lagging-strand Okazaki fragment RNA primers during DNA replication. Mediates the excision of single ribonucleotides from DNA:RNA duplexes. The chain is Ribonuclease H2 subunit C (RNASEH2C) from Bos taurus (Bovine).